Here is a 300-residue protein sequence, read N- to C-terminus: Acetylglutamate kinase (300 aa).

Residues 68 to 69 (GG), Arg-90, and Asn-195 contribute to the substrate site.

It belongs to the acetylglutamate kinase family. ArgB subfamily.

The protein localises to the cytoplasm. The catalysed reaction is N-acetyl-L-glutamate + ATP = N-acetyl-L-glutamyl 5-phosphate + ADP. The protein operates within amino-acid biosynthesis; L-arginine biosynthesis; N(2)-acetyl-L-ornithine from L-glutamate: step 2/4. Its function is as follows. Catalyzes the ATP-dependent phosphorylation of N-acetyl-L-glutamate. This chain is Acetylglutamate kinase, found in Azotobacter vinelandii (strain DJ / ATCC BAA-1303).